A 226-amino-acid chain; its full sequence is Neuron-specific vesicular protein calcyon (226 aa).

Residues 1–21 (MVKLGCSFSGKPGKEAGDQDG) form a disordered region. The Extracellular portion of the chain corresponds to 1–88 (MVKLGCSFSG…EEGRRLPTAR (88 aa)). Residues 89–109 (MIAFAMALLGCVLIMYKAIWY) traverse the membrane as a helical segment. Residues 110–226 (DQFTCPDGFL…AEGVPSQPPK (117 aa)) lie on the Cytoplasmic side of the membrane. A disordered region spans residues 177-226 (HKGTTPAAMAVSTAAAAAAAEGTEPSGKSLDTREKEDPQKAEGVPSQPPK). Residues 183–196 (AAMAVSTAAAAAAA) show a composition bias toward low complexity. A compositionally biased stretch (basic and acidic residues) spans 206 to 216 (LDTREKEDPQK).

Belongs to the NSG family. Interacts with CLTA. In terms of tissue distribution, most abundant in brain. Also expressed in testis and ovary and, at much lower levels, in kidney and heart.

The protein localises to the cytoplasmic vesicle membrane. It localises to the cell membrane. Its function is as follows. Interacts with clathrin light chain A and stimulates clathrin self-assembly and clathrin-mediated endocytosis. This Mus musculus (Mouse) protein is Neuron-specific vesicular protein calcyon (Caly).